The sequence spans 650 residues: AP-1-like transcription factor YAP1 (650 aa).

Positions 1 to 89 are disordered; sequence MSVSTAKRSL…AFRERKERKM (89 aa). Residues Ser9, Ser14, and Ser17 each carry the phosphoserine modification. Composition is skewed to basic and acidic residues over residues 22–50, 58–68, and 80–89; these read EGSK…EQPK, KKQDLDPETKQ, and AFRERKERKM. 2 short sequence motifs (bipartite nuclear localization signal) span residues 35 to 42 and 68 to 75; these read HRRTGTRD and QKRTAQNR. A bZIP domain is found at 64–127; sequence PETKQKRTAQ…ITLVNELKKY (64 aa). The interval 67–90 is basic motif; it reads KQKRTAQNRAAQRAFRERKERKMK. The tract at residues 92–120 is leucine-zipper; sequence LEKKVQSLESIQQQNEVEATFLRDQLITL. 2 disordered regions span residues 149–169 and 183–251; these read HFSK…PNDD and QYPL…PNSS. Over residues 150–162 the composition is skewed to polar residues; that stretch reads FSKNNVNHSNSEP. Thr165 is subject to Phosphothreonine. The span at 195-209 shows a compositional bias: polar residues; sequence SKNVGKQLPSPNDPS. Phosphoserine is present on Ser204. The transcription activation 1 stretch occupies residues 220 to 378; that stretch reads QKKLSDATDS…YENSFSGFGR (159 aa). Low complexity predominate over residues 226–246; it reads ATDSSSATLDSLSNSNDVLNN. Positions 303–315 are n-CRD; the sequence is CSKMNQVCGTRQC. Cystine bridges form between Cys303-Cys598, Cys310-Cys629, Cys598-Cys620, Cys598-Cys629, and Cys620-Cys629. Ser372 bears the Phosphoserine mark. Residues 392–414 show a composition bias toward low complexity; it reads DNSTGSTDSTGSTGNKNKKNNNN. Disordered regions lie at residues 392-419, 510-532, and 551-591; these read DNST…DDVL, LFGE…DDES, and LQSV…VPSK. The segment at 430 to 537 is transcription activation 2; it reads NQVTNFFSPG…SDDESSLIKN (108 aa). Ser528 carries the phosphoserine modification. A compositionally biased stretch (polar residues) spans 551–570; that stretch reads LQSVPGNESEISQKNGSSLQ. The segment covering 571–580 has biased composition (low complexity); it reads NADKINNGND. A c-CRD region spans residues 598–629; it reads CSEIWDRITTHPKYSDIDVDGLCSELMAKAKC. The Nuclear export signal signature appears at 614-621; the sequence is IDVDGLCS.

This sequence belongs to the bZIP family. YAP subfamily. In terms of assembly, interacts independent of oxidation state in the cytoplasm with the karyopherin PSE1/KAP121 (and less strongly with KAP123). The reduced form of YAP1 interacts in the nucleus with the nuclear export protein CRM1, and in the cytoplasm with YBP1 and the peroxiredoxin HYR1/GPX3/ORP1. Interacts with RBG1. In terms of processing, depending on the oxidative stress inducing agent, YAP1 can undergo two distinct conformational changes, both involving disulfide bond formation, and both masking the nuclear export signal, thus abolishing nuclear export by CRM1/exportin 1. The disulfide stress-inducing agent diamide leads to the formation of one of three possible disulfide bonds in the c-CRD. Peroxide stress induces the formation of the HYR1/GPX3- and YBP1-dependent interdomain disulfide bond between Cys-303 and Cys-598 (causing nuclear localization of YAP1), and the possibly stabilizing bond between Cys-310 and Cys-629 (required for full activity of YAP1).

It is found in the nucleus. The protein localises to the cytoplasm. Functionally, transcription activator involved in oxidative stress response and redox homeostasis. Regulates the transcription of genes encoding antioxidant enzymes and components of the cellular thiol-reducing pathways, including the thioredoxin system (TRX2, TRR1), the glutaredoxin system (GSH1, GLR1), superoxide dismutase (SOD1, SOD2), glutathione peroxidase (GPX2), and thiol-specific peroxidases (TSA1, AHP1). The induction of some of these genes requires the cooperative action of both, YAP1 and SKN7. Preferentially binds to promoters with the core binding site 5'-TTA[CG]TAA-3'. Activity of the transcription factor is controlled through oxidation of specific cysteine residues resulting in the alteration of its subcellular location. Oxidative stress (as well as carbon stress, but not increased temperature, acidic pH, or ionic stress) induces nuclear accumulation and as a result YAP1 transcriptional activity. Activation by hydrogen peroxide or thiol-reactive chemicals elicit distinct adaptive gene responses. Nuclear export is restored when disulfide bonds are reduced by thioredoxin (TRX2), whose expression is controlled by YAP1, providing a mechanism for negative autoregulation. When overexpressed, YAP1 confers pleiotropic drug-resistance and increases cellular tolerance to cadmium, iron chelators and zinc. The chain is AP-1-like transcription factor YAP1 from Saccharomyces cerevisiae (strain ATCC 204508 / S288c) (Baker's yeast).